A 111-amino-acid polypeptide reads, in one-letter code: UPF0060 membrane protein Pden_1837 (111 aa).

The next 4 membrane-spanning stretches (helical) occupy residues 7 to 27 (IAVY…FWAW), 30 to 50 (LGKS…FAWL), 62 to 82 (AYAA…WLTE), and 91 to 111 (ILGG…PRAA).

The protein belongs to the UPF0060 family.

The protein localises to the cell inner membrane. The sequence is that of UPF0060 membrane protein Pden_1837 from Paracoccus denitrificans (strain Pd 1222).